The sequence spans 368 residues: Endophilin-A2 (368 aa).

The segment at 1 to 21 (MSVAGLKKQFYKASQLVSEKV) is membrane-binding amphipathic helix. The 232-residue stretch at 18–249 (SEKVGGAEGT…LKRRMREASS (232 aa)) folds into the BAR domain. Residues 60–87 (PNPASRAKLTMLNTVSKIRGQVKNPGYP) are required for dimerization upon membrane association. Residues 145–250 (NLCEKDLKEI…KRRMREASSR (106 aa)) adopt a coiled-coil conformation. Residues 218 to 254 (LVDAQLDYHRQAVQILDELAEKLKRRMREASSRPKRE) are interaction with ARC. The tract at residues 244–308 (MREASSRPKR…PSRSMPPLDQ (65 aa)) is disordered. Residues 245 to 263 (REASSRPKREYKPKPREPF) are compositionally biased toward basic and acidic residues. Residues S288 and S292 each carry the phosphoserine modification. Residue T298 is modified to Phosphothreonine. The 60-residue stretch at 306–365 (LDQPSCKALYDFEPENDGELGFHEGDVITLTNQIDENWYEGMLDGQSGFFPLSYVEVLVP) folds into the SH3 domain. Phosphotyrosine is present on Y315.

Belongs to the endophilin family. As to quaternary structure, interacts with ARC. Interacts with SYNJ1 and DNM1. Interacts with PDCD6IP. Interacts with BIN2. As to expression, ubiquitous. Higher expression in pancreas, placenta, prostate, testis and uterus.

It localises to the cytoplasm. Its subcellular location is the early endosome membrane. The protein localises to the cell projection. It is found in the podosome. Functionally, implicated in endocytosis. May recruit other proteins to membranes with high curvature. This chain is Endophilin-A2 (SH3GL1), found in Homo sapiens (Human).